We begin with the raw amino-acid sequence, 168 residues long: Endoribonuclease YbeY (168 aa).

3 residues coordinate Zn(2+): His126, His130, and His136.

The protein belongs to the endoribonuclease YbeY family. Requires Zn(2+) as cofactor.

It localises to the cytoplasm. In terms of biological role, single strand-specific metallo-endoribonuclease involved in late-stage 70S ribosome quality control and in maturation of the 3' terminus of the 16S rRNA. This is Endoribonuclease YbeY from Rhizobium meliloti (strain 1021) (Ensifer meliloti).